We begin with the raw amino-acid sequence, 326 residues long: Flap endonuclease 1 (326 aa).

Residues 1–98 (MGVQFNDSIP…KTREERRKVK (98 aa)) are N-domain. Residues Asp-27, Asp-80, Glu-152, Glu-154, Asp-173, Asp-175, and Asp-224 each coordinate Mg(2+). Residues 116 to 245 (DMQKYAKRIN…KKALTIIKNK (130 aa)) are I-domain. The interaction with PCNA stretch occupies residues 318–326 (SQTSLDSWF).

Belongs to the XPG/RAD2 endonuclease family. FEN1 subfamily. In terms of assembly, interacts with PCNA. PCNA stimulates the nuclease activity without altering cleavage specificity. The cofactor is Mg(2+).

Its function is as follows. Structure-specific nuclease with 5'-flap endonuclease and 5'-3' exonuclease activities involved in DNA replication and repair. During DNA replication, cleaves the 5'-overhanging flap structure that is generated by displacement synthesis when DNA polymerase encounters the 5'-end of a downstream Okazaki fragment. Binds the unpaired 3'-DNA end and kinks the DNA to facilitate 5' cleavage specificity. Cleaves one nucleotide into the double-stranded DNA from the junction in flap DNA, leaving a nick for ligation. Also involved in the base excision repair (BER) pathway. Acts as a genome stabilization factor that prevents flaps from equilibrating into structures that lead to duplications and deletions. Also possesses 5'-3' exonuclease activity on nicked or gapped double-stranded DNA. The protein is Flap endonuclease 1 of Methanococcus aeolicus (strain ATCC BAA-1280 / DSM 17508 / OCM 812 / Nankai-3).